A 108-amino-acid chain; its full sequence is DNA-binding protein HBbu (108 aa).

It belongs to the bacterial histone-like protein family.

Functionally, histone-like DNA-binding protein which is capable of wrapping DNA to stabilize it, and thus to prevent its denaturation under extreme environmental conditions. The sequence is that of DNA-binding protein HBbu (hbb) from Borrelia garinii subsp. bavariensis (strain ATCC BAA-2496 / DSM 23469 / PBi) (Borreliella bavariensis).